We begin with the raw amino-acid sequence, 389 residues long: Putative RNA methyltransferase R405 (389 aa).

S-adenosyl-L-methionine is bound by residues glutamine 207, aspartate 261, and aspartate 314. Cysteine 342 acts as the Nucleophile in catalysis.

This sequence belongs to the class I-like SAM-binding methyltransferase superfamily. RNA M5U methyltransferase family.

This is Putative RNA methyltransferase R405 from Acanthamoeba polyphaga (Amoeba).